Here is a 216-residue protein sequence, read N- to C-terminus: Somatotropin (216 aa).

The N-terminal stretch at 1 to 26 is a signal peptide; sequence MAADPQSSVLLAFALLCLPWPQEVGA. His-45 is a Zn(2+) binding site. Cys-78 and Cys-189 are disulfide-bonded. The residue at position 131 (Ser-131) is a Phosphoserine. Glu-198 is a binding site for Zn(2+). Cys-206 and Cys-214 are oxidised to a cystine.

This sequence belongs to the somatotropin/prolactin family.

The protein localises to the secreted. Plays an important role in growth control. Its major role in stimulating body growth is to stimulate the liver and other tissues to secrete IGF1. It stimulates both the differentiation and proliferation of myoblasts. It also stimulates amino acid uptake and protein synthesis in muscle and other tissues. The sequence is that of Somatotropin (GH1) from Ailuropoda melanoleuca (Giant panda).